Consider the following 230-residue polypeptide: Acyl-coenzyme A thioesterase THEM4 (230 aa).

The transit peptide at 1–27 (MLRNCAMRLRTLGATPARRPGAARRLF) directs the protein to the mitochondrion. Ser28 and Ser29 each carry phosphoserine. An N6-succinyllysine mark is found at Lys46 and Lys57. At Lys65 the chain carries N6-acetyllysine. An N6-succinyllysine mark is found at Lys89 and Lys98. Asp152 serves as the catalytic Proton donor/acceptor. Residues Lys175 and 196 to 197 (RK) contribute to the substrate site. An N6-succinyllysine modification is found at Lys197.

The protein belongs to the THEM4/THEM5 thioesterase family. Homodimer and homotetramer. Interacts with AKT1 in the cytosol. As to quaternary structure, (Microbial infection) Interacts with V-AKT from AKT8 murine leukemia virus. Post-translationally, phosphorylated.

It is found in the cell membrane. It localises to the cell projection. The protein localises to the ruffle membrane. The protein resides in the cytoplasm. Its subcellular location is the mitochondrion. It is found in the mitochondrion inner membrane. It localises to the mitochondrion intermembrane space. It carries out the reaction hexadecanoyl-CoA + H2O = hexadecanoate + CoA + H(+). The catalysed reaction is octanoyl-CoA + H2O = octanoate + CoA + H(+). It catalyses the reaction decanoyl-CoA + H2O = decanoate + CoA + H(+). The enzyme catalyses dodecanoyl-CoA + H2O = dodecanoate + CoA + H(+). It carries out the reaction tetradecanoyl-CoA + H2O = tetradecanoate + CoA + H(+). The catalysed reaction is (9Z)-octadecenoyl-CoA + H2O = (9Z)-octadecenoate + CoA + H(+). It catalyses the reaction (5Z,8Z,11Z,14Z)-eicosatetraenoyl-CoA + H2O = (5Z,8Z,11Z,14Z)-eicosatetraenoate + CoA + H(+). Its function is as follows. Has acyl-CoA thioesterase activity towards medium and long-chain (C14 to C18) fatty acyl-CoA substrates, and probably plays a role in mitochondrial fatty acid metabolism. Plays a role in the apoptotic process, possibly via its regulation of AKT1 activity. This is Acyl-coenzyme A thioesterase THEM4 (Them4) from Mus musculus (Mouse).